The chain runs to 130 residues: Large ribosomal subunit protein bL20 (130 aa).

This sequence belongs to the bacterial ribosomal protein bL20 family.

Functionally, binds directly to 23S ribosomal RNA and is necessary for the in vitro assembly process of the 50S ribosomal subunit. It is not involved in the protein synthesizing functions of that subunit. The protein is Large ribosomal subunit protein bL20 of Leifsonia xyli subsp. xyli (strain CTCB07).